The primary structure comprises 156 residues: Large ribosomal subunit protein uL23 (156 aa).

The segment covering 1–19 has biased composition (basic and acidic residues); sequence MAPKAKKEAPAPPKVEAKA. A disordered region spans residues 1-67; it reads MAPKAKKEAP…PKYPRKSAPR (67 aa). At Ala2 the chain carries N,N,N-trimethylalanine. A Glycyl lysine isopeptide (Lys-Gly) (interchain with G-Cter in SUMO2) cross-link involves residue Lys14. Over residues 20-67 the composition is skewed to basic residues; it reads KALKAKKAVLKGVHSHKKKKIRTSPTFRRPKTLRLRRQPKYPRKSAPR. Residues 32–74 form a beta-like import receptor binding (BIB) domain region; that stretch reads VHSHKKKKIRTSPTFRRPKTLRLRRQPKYPRKSAPRRNKLDHY. At Arg41 the chain carries Citrulline. Ser43 bears the Phosphoserine mark. Thr45 bears the Phosphothreonine mark. N6-acetyllysine is present on Lys70.

It belongs to the universal ribosomal protein uL23 family. As to quaternary structure, component of the large ribosomal subunit. Interacts with LYAR and GNL2. Interacts with MDM2; this interaction may promote MDM2-mediated p53/TP53 polyubiquitination. Directly interacts (via BIB domain) with IPO5, IPO7, KPNB1 and TNPO1; these interactions are involved in RPL23A nuclear import for the assembly of ribosomal subunits. Interacts with IPO8. In terms of processing, N-terminus is methylated by METTL11A/NTM1. Citrullinated by PADI4.

It is found in the cytoplasm. The protein resides in the nucleus. Component of the large ribosomal subunit. The ribosome is a large ribonucleoprotein complex responsible for the synthesis of proteins in the cell. Binds a specific region on the 26S rRNA. May promote p53/TP53 degradation possibly through the stimulation of MDM2-mediated TP53 polyubiquitination. The protein is Large ribosomal subunit protein uL23 (RPL23A) of Oryctolagus cuniculus (Rabbit).